Reading from the N-terminus, the 425-residue chain is Serine--tRNA ligase (425 aa).

230 to 232 (TAE) is an L-serine binding site. Residue 261–263 (RSE) coordinates ATP. Residue glutamate 284 participates in L-serine binding. 348–351 (EISS) contributes to the ATP binding site. Serine 384 serves as a coordination point for L-serine.

This sequence belongs to the class-II aminoacyl-tRNA synthetase family. Type-1 seryl-tRNA synthetase subfamily. In terms of assembly, homodimer. The tRNA molecule binds across the dimer.

It is found in the cytoplasm. It catalyses the reaction tRNA(Ser) + L-serine + ATP = L-seryl-tRNA(Ser) + AMP + diphosphate + H(+). The enzyme catalyses tRNA(Sec) + L-serine + ATP = L-seryl-tRNA(Sec) + AMP + diphosphate + H(+). The protein operates within aminoacyl-tRNA biosynthesis; selenocysteinyl-tRNA(Sec) biosynthesis; L-seryl-tRNA(Sec) from L-serine and tRNA(Sec): step 1/1. Its function is as follows. Catalyzes the attachment of serine to tRNA(Ser). Is also able to aminoacylate tRNA(Sec) with serine, to form the misacylated tRNA L-seryl-tRNA(Sec), which will be further converted into selenocysteinyl-tRNA(Sec). This Streptococcus pyogenes serotype M49 (strain NZ131) protein is Serine--tRNA ligase.